Reading from the N-terminus, the 260-residue chain is Winged helix repair factor 1 (260 aa).

3 winged helix domain regions span residues 38-110 (FTED…MVVM), 126-185 (SRAT…LAVP), and 186-260 (GAGR…ISET).

The protein belongs to the STK19 family. In terms of assembly, monomer in solution. Homodimer; when bound to DNA. Component of a transcription-coupled nucleotide excision repair (TC-NER) complex which assembles and interacts with the multiprotein RNA polymerase II complex when it stalls at DNA lesions.

Its subcellular location is the nucleus. DNA-binding protein which is required for efficient transcription-coupled nucleotide excision repair (TC-NER). Acts as part of a TC-NER complex which assembles and interacts with RNA polymerase II (RNAPII) when it stalls at DNA lesions. The polypeptide is Winged helix repair factor 1 (Xenopus laevis (African clawed frog)).